The sequence spans 246 residues: Mediator of RNA polymerase II transcription subunit 6 (246 aa).

2 disordered regions span residues 165 to 186 (MKKKEEEKKEEDERKLEERSTN) and 207 to 246 (EALEKLDVKEEENPKPEEAPSASAVGEPKFAEPAARATTK). 2 stretches are compositionally biased toward basic and acidic residues: residues 166–184 (KKKEEEKKEEDERKLEERS) and 208–224 (ALEKLDVKEEENPKPEE).

This sequence belongs to the Mediator complex subunit 6 family. Component of the Mediator complex. Interacts with let-19/mdt-13. Interacts with RNA polymerase II. Interacts with mdt-28.

Its subcellular location is the nucleus. Component of the Mediator complex, a coactivator involved in the regulated transcription of nearly all RNA polymerase II-dependent genes. Mediator functions as a bridge to convey information from gene-specific regulatory proteins to the basal RNA polymerase II transcription machinery. Mediator is recruited to promoters by direct interactions with regulatory proteins and serves as a scaffold for the assembly of a functional preinitiation complex with RNA polymerase II and the general transcription factors. The polypeptide is Mediator of RNA polymerase II transcription subunit 6 (mdt-6) (Caenorhabditis briggsae).